Reading from the N-terminus, the 273-residue chain is MDRNIVRVSREDPQRSSTDIQMVVKTPNEVTPSLRTVRRRLQDAGLHGRRPAKKPSISKKNRIARVAWARAHLHWGRQDWANHVFSDESKFNLFGTDGIKWIRRPVGCRFDPSYQLQTVKHGGGSVMVWGCFSGTSMDPLRRIDSIMDRFVYEDILENTMRPWARSTVGRAFVFQQDNDPKHTSKHIKEWFRRRHVDLLDWPSQSPDLNPIEHLWEHVERHVRGVRASNANQKFDQLQDVWQAIPMSVIDTILDSMPRRCQTVIDAKGFPTKY.

It belongs to the transposase 5 family.

The protein localises to the nucleus. Functionally, probably essential for transposable element Tcb2 transposition. The protein is Transposable element Tcb2 transposase of Caenorhabditis briggsae.